Reading from the N-terminus, the 857-residue chain is Zinc finger protein 574 (857 aa).

C2H2-type zinc fingers lie at residues Y15–H37, Y58–H80, Y99–H121, Y206–H228, F297–H319, F324–H346, Y352–H374, F380–H401, F428–H451, H457–H479, Y485–H507, Y513–H535, Y541–H563, and Y569–H591. The segment at H597–K619 adopts a C2H2-type 15; degenerate zinc-finger fold. 5 C2H2-type zinc fingers span residues L628–H651, L681–H703, Y709–H731, F737–H759, and H765–H787. Positions A648 to G678 are disordered. A compositionally biased stretch (polar residues) spans H651–K663.

The protein belongs to the krueppel C2H2-type zinc-finger protein family.

It is found in the nucleus. May be involved in transcriptional regulation. This chain is Zinc finger protein 574 (znf574), found in Xenopus tropicalis (Western clawed frog).